Reading from the N-terminus, the 267-residue chain is MKKITKISIQKKAGRYNIDLDNQFAFGVAESVLIKFGLAKGRELDDELIAEIKHNDSIAKALSIALNFLSHSLHTVKQVKQKMSEKEVSESIQDEVVAQLYEQKYIDDLNYAQHYVSTKKIISPKGPNVIKMDLKQAGVNDDDIETALSDYTHEEQIEIAEKLALKSATTYKRESTRAKKQKIVQALATKGFSFDIAEIVVDRVITENDDEIELENIKRQAEKSWRRYRNEVPSQRIYKTKNSLYTKGYNAELINVVIHELEVSADD.

It belongs to the RecX family.

The protein resides in the cytoplasm. Functionally, modulates RecA activity. This Leuconostoc mesenteroides subsp. mesenteroides (strain ATCC 8293 / DSM 20343 / BCRC 11652 / CCM 1803 / JCM 6124 / NCDO 523 / NBRC 100496 / NCIMB 8023 / NCTC 12954 / NRRL B-1118 / 37Y) protein is Regulatory protein RecX.